The primary structure comprises 69 residues: Small ribosomal subunit protein bS21 (69 aa).

The segment at 50–69 (KAFKRKQAKKVRKLKQKTNR) is disordered.

It belongs to the bacterial ribosomal protein bS21 family.

In Borrelia garinii subsp. bavariensis (strain ATCC BAA-2496 / DSM 23469 / PBi) (Borreliella bavariensis), this protein is Small ribosomal subunit protein bS21.